A 295-amino-acid polypeptide reads, in one-letter code: Sulfotransferase 1 family member D1 (295 aa).

48 to 53 provides a ligand contact to 3'-phosphoadenylyl sulfate; sequence KSGTTW. Substrate-binding positions include Phe81 and 106-108; that span reads KTH. His108 (proton acceptor) is an active-site residue. Residues Arg130 and Ser138 each contribute to the 3'-phosphoadenylyl sulfate site. Phe142 provides a ligand contact to substrate. 3'-phosphoadenylyl sulfate is bound by residues Tyr193, Ser227, and 257 to 259; that span reads RKG.

The protein belongs to the sulfotransferase 1 family.

Its subcellular location is the cytoplasm. In terms of biological role, sulfotransferase with broad substrate specificity that utilizes 3'-phospho-5'-adenylyl sulfate (PAPS) as sulfonate donor to catalyze the sulfate conjugation of catecholamines, such as dopamine, prostaglandins, leukotriene E4, drugs and xenobiotic compounds. Has sulfotransferase activity towards p-nitrophenol, 2-naphthylamine and minoxidil (in vitro). Sulfonation increases the water solubility of most compounds, and therefore their renal excretion, but it can also result in bioactivation to form active metabolites. This is Sulfotransferase 1 family member D1 (Sult1d1) from Rattus norvegicus (Rat).